Consider the following 160-residue polypeptide: Cytochrome b6-f complex subunit 4 (160 aa).

Helical transmembrane passes span 36-56, 95-115, and 127-147; these read ILYM…GLAI, LLGI…PFIE, and PIAM…GAGA.

It belongs to the cytochrome b family. PetD subfamily. As to quaternary structure, the 4 large subunits of the cytochrome b6-f complex are cytochrome b6, subunit IV (17 kDa polypeptide, PetD), cytochrome f and the Rieske protein, while the 4 small subunits are PetG, PetL, PetM and PetN. The complex functions as a dimer.

The protein localises to the cellular thylakoid membrane. Component of the cytochrome b6-f complex, which mediates electron transfer between photosystem II (PSII) and photosystem I (PSI), cyclic electron flow around PSI, and state transitions. The protein is Cytochrome b6-f complex subunit 4 of Synechocystis sp. (strain ATCC 27184 / PCC 6803 / Kazusa).